The following is a 176-amino-acid chain: I-Kappa-B like protein G1 (176 aa).

ANK repeat units lie at residues 56-88, 93-123, and 127-156; these read EGRQCTHIAAEYDVSNAVMKIELLVMLGADINS, FGNTLLHIAAGTENYQLAEWLCKKPGVELGA, and LYKTAYHIAYERQNARMMEILRVNGAVCDD.

It belongs to the polydnaviridae I-Kappa-B-like protein family.

Suppresses the host immune response through NF-kappa-B inactivation. Possesses ankyrin repeat domains required for NF-kappa-B binding but lacks the regulatory regions required for dissociation from NF-kappa-B and degradation. Therefore, prevents host NF-kappa-B release and subsequent activation. The sequence is that of I-Kappa-B like protein G1 (G3) from Microplitis demolitor (Parasitoid wasp).